Reading from the N-terminus, the 610-residue chain is UvrABC system protein C (610 aa).

Residues Ser-16–Val-94 form the GIY-YIG domain. Positions Asp-204–Val-239 constitute a UVR domain.

The protein belongs to the UvrC family. Interacts with UvrB in an incision complex.

The protein resides in the cytoplasm. Functionally, the UvrABC repair system catalyzes the recognition and processing of DNA lesions. UvrC both incises the 5' and 3' sides of the lesion. The N-terminal half is responsible for the 3' incision and the C-terminal half is responsible for the 5' incision. This chain is UvrABC system protein C, found in Escherichia coli O139:H28 (strain E24377A / ETEC).